Consider the following 62-residue polypeptide: UPF0434 protein ASA_1553 (62 aa).

This sequence belongs to the UPF0434 family.

The protein is UPF0434 protein ASA_1553 of Aeromonas salmonicida (strain A449).